The following is a 302-amino-acid chain: Sulfate adenylyltransferase subunit 2 (302 aa).

It belongs to the PAPS reductase family. CysD subfamily. Heterodimer composed of CysD, the smaller subunit, and CysN.

It carries out the reaction sulfate + ATP + H(+) = adenosine 5'-phosphosulfate + diphosphate. It functions in the pathway sulfur metabolism; hydrogen sulfide biosynthesis; sulfite from sulfate: step 1/3. With CysN forms the ATP sulfurylase (ATPS) that catalyzes the adenylation of sulfate producing adenosine 5'-phosphosulfate (APS) and diphosphate, the first enzymatic step in sulfur assimilation pathway. APS synthesis involves the formation of a high-energy phosphoric-sulfuric acid anhydride bond driven by GTP hydrolysis by CysN coupled to ATP hydrolysis by CysD. In Escherichia coli O157:H7 (strain EC4115 / EHEC), this protein is Sulfate adenylyltransferase subunit 2.